A 491-amino-acid chain; its full sequence is Glycylpeptide N-tetradecanoyltransferase (491 aa).

45–48 (HKFW) provides a ligand contact to tetradecanoyl-CoA. Positions 53–79 (VPQITGSGASAPMEEGPIDDPKTPADV) are disordered. Residues 182–184 (LCV) and 190–194 (SKRLA) contribute to the tetradecanoyl-CoA site. Residue L491 is the Proton acceptor; via carboxylate of the active site.

The protein belongs to the NMT family. In terms of assembly, monomer.

It localises to the cytoplasm. The catalysed reaction is N-terminal glycyl-[protein] + tetradecanoyl-CoA = N-tetradecanoylglycyl-[protein] + CoA + H(+). In terms of biological role, adds a myristoyl group to the N-terminal glycine residue of certain cellular proteins. This Cryptococcus neoformans (Filobasidiella neoformans) protein is Glycylpeptide N-tetradecanoyltransferase.